The following is a 120-amino-acid chain: Large ribosomal subunit protein uL22 (120 aa).

It belongs to the universal ribosomal protein uL22 family. In terms of assembly, part of the 50S ribosomal subunit.

Its function is as follows. This protein binds specifically to 23S rRNA; its binding is stimulated by other ribosomal proteins, e.g. L4, L17, and L20. It is important during the early stages of 50S assembly. It makes multiple contacts with different domains of the 23S rRNA in the assembled 50S subunit and ribosome. In terms of biological role, the globular domain of the protein is located near the polypeptide exit tunnel on the outside of the subunit, while an extended beta-hairpin is found that lines the wall of the exit tunnel in the center of the 70S ribosome. The protein is Large ribosomal subunit protein uL22 of Corynebacterium aurimucosum (strain ATCC 700975 / DSM 44827 / CIP 107346 / CN-1) (Corynebacterium nigricans).